The chain runs to 21 residues: Peptide PGLa-R5 (21 aa).

Leu21 carries the leucine amide modification.

Expressed by the skin glands.

Its subcellular location is the secreted. Its function is as follows. Antimicrobial peptide. This is Peptide PGLa-R5 from Xenopus ruwenzoriensis (Uganda clawed frog).